Reading from the N-terminus, the 285-residue chain is Octanoyltransferase (285 aa).

One can recognise a BPL/LPL catalytic domain in the interval 50 to 277 (LRTPDELWIV…NIAQRHAGDI (228 aa)). Substrate contacts are provided by residues 89–96 (RGGQVTWH), 189–191 (SLG), and 202–204 (GIA). Cys-220 (acyl-thioester intermediate) is an active-site residue.

It belongs to the LipB family.

It is found in the cytoplasm. It carries out the reaction octanoyl-[ACP] + L-lysyl-[protein] = N(6)-octanoyl-L-lysyl-[protein] + holo-[ACP] + H(+). Its pathway is protein modification; protein lipoylation via endogenous pathway; protein N(6)-(lipoyl)lysine from octanoyl-[acyl-carrier-protein]: step 1/2. Functionally, catalyzes the transfer of endogenously produced octanoic acid from octanoyl-acyl-carrier-protein onto the lipoyl domains of lipoate-dependent enzymes. Lipoyl-ACP can also act as a substrate although octanoyl-ACP is likely to be the physiological substrate. This Psychrobacter cryohalolentis (strain ATCC BAA-1226 / DSM 17306 / VKM B-2378 / K5) protein is Octanoyltransferase.